Reading from the N-terminus, the 554-residue chain is Perforin-1 (554 aa).

The signal sequence occupies residues 1–20 (MATCLFLLGLFLLLPRPVPA). 3 cysteine pairs are disulfide-bonded: Cys-22–Cys-75, Cys-30–Cys-72, and Cys-101–Cys-175. An MACPF domain is found at 26–374 (TRSECKQKHK…HYIMSRARWQ (349 aa)). A beta stranded transmembrane segment spans residues 128–148 (WRVGLDVNPRPEANMRASVAG). Asn-204 carries an N-linked (GlcNAc...) asparagine glycan. 4 disulfides stabilise this stretch: Cys-241–Cys-407, Cys-376–Cys-392, Cys-380–Cys-394, and Cys-396–Cys-406. Residues 256–278 (CLNVEAQVSIGAQASVSSEYKAC) traverse the membrane as a beta stranded segment. An N-linked (GlcNAc...) asparagine glycan is attached at Asn-375. An EGF-like domain is found at 375–407 (NCSRPCRSGQHKSSHDSCQCECQDSKVTNQDCC). A C2 domain is found at 395 to 513 (ECQDSKVTNQ…FHEVTCELNH (119 aa)). Ca(2+) contacts are provided by Gly-428, Asp-429, Thr-432, Ala-433, Asp-435, Asn-454, Glu-467, Asp-483, Ala-484, Asp-485, Trp-488, Asp-489, Asp-490, and Asp-491. 2 disulfide bridges follow: Cys-496-Cys-509 and Cys-524-Cys-533. Asn-548 is a glycosylation site (N-linked (GlcNAc...) asparagine).

This sequence belongs to the complement C6/C7/C8/C9 family. Monomer, as soluble protein. Homooligomer; homooligomerizes to form a pore-forming ring. Requires Ca(2+) as cofactor. Post-translationally, N-glycosylated. The glycosylation sites are facing the interior of the pore. As to expression, detected in cytotoxic T-lymphocytes and natural killer cells.

It localises to the cytolytic granule. Its subcellular location is the secreted. The protein localises to the cell membrane. It is found in the endosome lumen. In terms of biological role, pore-forming protein that plays a key role in granzyme-mediated programmed cell death, and in defense against virus-infected or neoplastic cells. Can insert into the membrane of target cells in its calcium-bound form, oligomerize and form large pores. Promotes cytolysis and apoptosis of target cells by mediating the passage and uptake of cytotoxic granzymes. Facilitates the delivery of cationic cargo protein, while anionic or neural proteins are not delivered efficiently. Perforin pores allow the release of mature caspase-7 (CASP7) into the extracellular milieu. In Mus musculus (Mouse), this protein is Perforin-1 (Prf1).